The sequence spans 467 residues: Heat shock factor protein 3 (467 aa).

A DNA-binding region spans residues 16 to 121 (VPGFLAKLWA…LLENIKRKVS (106 aa)). The hydrophobic repeat HR-A/B stretch occupies residues 128–201 (LKVCAEDLHK…LSLMRGNYIV (74 aa)). The tract at residues 364–389 (IQDFLNCIDASLEELQAMLSGKQYSF) is hydrophobic repeat HR-C. The disordered stretch occupies residues 427-449 (EDLGASERETAGSKGGQEGTESC).

It belongs to the HSF family. In terms of assembly, homotrimer. Expressed in most tissues. High levels are found in erythrocytes and low levels in liver.

It is found in the cytoplasm. It localises to the nucleus. DNA-binding protein that specifically binds heat shock promoter elements (HSE) and activates transcription. HSF3 binds DNA constitutively only when the C-terminal region is deleted. The chain is Heat shock factor protein 3 (HSF3) from Gallus gallus (Chicken).